The sequence spans 58 residues: Large ribosomal subunit protein bL32 (58 aa).

Residues 1-24 are disordered; the sequence is MAVPKKKTSKSKRDKRKATWKRKA.

The protein belongs to the bacterial ribosomal protein bL32 family.

In Synechococcus sp. (strain ATCC 27144 / PCC 6301 / SAUG 1402/1) (Anacystis nidulans), this protein is Large ribosomal subunit protein bL32.